The sequence spans 236 residues: Probable calcium-binding protein CML30 (236 aa).

The interval 43–64 (VVVVAKKRPEEEPRRPDPDADL) is disordered. Residues 49 to 60 (KRPEEEPRRPDP) are compositionally biased toward basic and acidic residues. 2 consecutive EF-hand domains span residues 59 to 94 (DPDA…LGIA) and 96 to 131 (SSAA…IPKR). Asp72, Asp74, Asp76, Glu83, Asp109, Asn111, Asp113, and Glu120 together coordinate Ca(2+). The interval 130–158 (KRRKSHQQHPLPSTAAADEEAAAADEEYE) is disordered. A compositionally biased stretch (acidic residues) spans 146-158 (ADEEAAAADEEYE). EF-hand domains lie at 161–196 (EEER…LGLR) and 202–236 (PAVA…VVKA). 9 residues coordinate Ca(2+): Asp174, Asn176, Asp178, Glu185, Asp215, Asp217, Asp219, Met221, and Glu226.

In terms of biological role, potential calcium sensor. The protein is Probable calcium-binding protein CML30 (CML30) of Oryza sativa subsp. japonica (Rice).